Here is a 780-residue protein sequence, read N- to C-terminus: Protein SEY1 (780 aa).

The Cytoplasmic segment spans residues 1 to 680 (MDSKEEAIQL…KRSMIKTTTH (680 aa)). Positions 35–265 (GVNYHVISVF…NEDYYFKPEY (231 aa)) constitute a GB1/RHD3-type G domain. GTP is bound at residue 45–52 (GSQSSGKS). A coiled-coil region spans residues 440–463 (EVKEEVVKRFENDLKETSDKLRVT). A helical membrane pass occupies residues 681 to 701 (IPLWIYAIIVVLGWNEFMMVI). Over 702–704 (RNP) the chain is Lumenal. A helical membrane pass occupies residues 705 to 725 (LFVTLTILILVSFYFINKFDL). The Cytoplasmic segment spans residues 726–780 (WGPVKSVAQTAAGETIGTIKTKLRDFVLEEHEKTPKIQSEKSNSDSEKVVENEKS). The disordered stretch occupies residues 756-780 (HEKTPKIQSEKSNSDSEKVVENEKS).

The protein belongs to the TRAFAC class dynamin-like GTPase superfamily. GB1/RHD3 GTPase family. RHD3 subfamily.

Its subcellular location is the endoplasmic reticulum membrane. In terms of biological role, cooperates with the reticulon proteins and tubule-shaping DP1 family proteins to generate and maintain the structure of the tubular endoplasmic reticulum network. Has GTPase activity, which is required for its function in ER organization. This chain is Protein SEY1, found in Vanderwaltozyma polyspora (strain ATCC 22028 / DSM 70294 / BCRC 21397 / CBS 2163 / NBRC 10782 / NRRL Y-8283 / UCD 57-17) (Kluyveromyces polysporus).